The chain runs to 200 residues: ATP-dependent Clp protease proteolytic subunit 2 (200 aa).

Residue S99 is the Nucleophile of the active site. The active site involves H123.

Belongs to the peptidase S14 family. Fourteen ClpP subunits assemble into 2 heptameric rings which stack back to back to give a disk-like structure with a central cavity, resembling the structure of eukaryotic proteasomes.

Its subcellular location is the cytoplasm. The enzyme catalyses Hydrolysis of proteins to small peptides in the presence of ATP and magnesium. alpha-casein is the usual test substrate. In the absence of ATP, only oligopeptides shorter than five residues are hydrolyzed (such as succinyl-Leu-Tyr-|-NHMec, and Leu-Tyr-Leu-|-Tyr-Trp, in which cleavage of the -Tyr-|-Leu- and -Tyr-|-Trp bonds also occurs).. Its function is as follows. Cleaves peptides in various proteins in a process that requires ATP hydrolysis. Has a chymotrypsin-like activity. Plays a major role in the degradation of misfolded proteins. The polypeptide is ATP-dependent Clp protease proteolytic subunit 2 (Symbiobacterium thermophilum (strain DSM 24528 / JCM 14929 / IAM 14863 / T)).